The following is a 721-amino-acid chain: Angiomotin-like 2a (721 aa).

Residues 35 to 84 are disordered; that stretch reads QQALRGGSSGGGAGSPRSSLESLTQEESLSPQLSARQEPQGQEHQGDFQH. Over residues 49–68 the composition is skewed to low complexity; it reads SPRSSLESLTQEESLSPQLS. Y103 is subject to Phosphotyrosine; by FGFR1. The disordered stretch occupies residues 169-214; that stretch reads DNIPMSSSHSYPQLSNNHSDTVVNEQSVHQPDQRGPPPEYPFMVRS. The span at 172 to 198 shows a compositional bias: polar residues; that stretch reads PMSSSHSYPQLSNNHSDTVVNEQSVHQ. A coiled-coil region spans residues 275–531; the sequence is ANNFQMEQLI…TRWEQKYLEE (257 aa). The segment covering 554 to 567 has biased composition (polar residues); that stretch reads INHSPRNSPNSSFN. 2 disordered regions span residues 554–575 and 666–709; these read INHSPRNSPNSSFNEDLPSPNH and DSST…TQIS. Positions 688 to 702 are enriched in low complexity; the sequence is SAPEPSTASSSESTS. The PDZ-binding motif lies at 718–721; that stretch reads EILI.

The protein belongs to the angiomotin family. As to quaternary structure, interacts with SRC. Phosphorylation at Tyr-103 is necessary for efficient binding to SRC and synergistically functioning with SRC to activate the downstream MAPK pathway. Expressed in endothelial cells.

The protein localises to the recycling endosome. It is found in the cytoplasm. The protein resides in the cell projection. It localises to the podosome. Its subcellular location is the cell junction. In terms of biological role, required for proper architecture of actin filaments and for cell movements during embryogenesis. Plays a role in the radial actin fiber architecture in skin epithelial cells, thereby maintains cell geometry, size and cell interconnectivity within the skin. Plays an important role in coupling actin fibers to cell junctions in endothelial cells and is therefore required for correct endothelial cell morphology and maintenance of dorsal aorta lumen expansion during embryogenesis. May further play a role in the polarity, proliferation and migration of endothelial cells, and therefore participates in angiogenesis. Inhibits the Wnt/beta-catenin signaling pathway, probably by recruiting CTNNB1 to recycling endosomes and hence preventing its translocation to the nucleus. Regulates the translocation of phosphorylated SRC to peripheral cell-matrix adhesion sites. Selectively promotes FGF-induced MAPK activation through SRC. This Danio rerio (Zebrafish) protein is Angiomotin-like 2a (amotl2a).